The chain runs to 31 residues: Phallacidin proprotein 1 (31 aa).

Positions 1–10 are excised as a propeptide; that stretch reads MSDINATRLP. Residues 11 to 17 constitute a cross-link (cyclopeptide (Ala-Pro)); sequence AWLVDCP. Positions 12–16 form a cross-link, 2'-cysteinyl-6'-hydroxytryptophan sulfoxide (Trp-Cys); it reads WLVDC. A propeptide spanning residues 18–31 is cleaved from the precursor; the sequence is CVGDDVNRLLTRGE.

Belongs to the MSDIN fungal toxin family. Post-translationally, processed by the macrocyclase-peptidase enzyme POPB to yield a toxic cyclic heptapeptide. POPB first removes 10 residues from the N-terminus. Conformational trapping of the remaining peptide forces the enzyme to release this intermediate rather than proceed to macrocyclization. The enzyme rebinds the remaining peptide in a different conformation and catalyzes macrocyclization of the N-terminal 7 residues.

Major toxin that belongs to the bicyclic heptapeptides called phallotoxins. Although structurally related to amatoxins, phallotoxins have a different mode of action, which is the stabilization of F-actin. Phallotoxins are poisonous when administered parenterally, but not orally because of poor absorption. This Amanita bisporigera (Destroying angel) protein is Phallacidin proprotein 1 (PHA1_2).